The chain runs to 132 residues: Small ribosomal subunit protein eS24 (132 aa).

Residues 92–101 (LARHGLYEKK) show a composition bias toward basic and acidic residues. The interval 92 to 132 (LARHGLYEKKRPTRKQRKERKNRMKKVRGTKKSKVGAAAKK) is disordered. Basic residues predominate over residues 102–132 (RPTRKQRKERKNRMKKVRGTKKSKVGAAAKK).

It belongs to the eukaryotic ribosomal protein eS24 family.

In Spodoptera frugiperda (Fall armyworm), this protein is Small ribosomal subunit protein eS24 (RpS24).